The chain runs to 104 residues: Protein MHF2 homolog (104 aa).

The protein belongs to the CENP-X/MHF2 family.

The protein resides in the nucleus. Acts in the same pathway as FANCM to restrain class II meiotic crossing over (CO), and acts with FANCM during meiosis to repair interstrand cross-links (ICLs). This Arabidopsis thaliana (Mouse-ear cress) protein is Protein MHF2 homolog.